The following is an 872-amino-acid chain: Alanine--tRNA ligase (872 aa).

Zn(2+) is bound by residues histidine 563, histidine 567, cysteine 665, and histidine 669.

This sequence belongs to the class-II aminoacyl-tRNA synthetase family. It depends on Zn(2+) as a cofactor.

Its subcellular location is the cytoplasm. The enzyme catalyses tRNA(Ala) + L-alanine + ATP = L-alanyl-tRNA(Ala) + AMP + diphosphate. Functionally, catalyzes the attachment of alanine to tRNA(Ala) in a two-step reaction: alanine is first activated by ATP to form Ala-AMP and then transferred to the acceptor end of tRNA(Ala). Also edits incorrectly charged Ser-tRNA(Ala) and Gly-tRNA(Ala) via its editing domain. The sequence is that of Alanine--tRNA ligase from Bacteroides fragilis (strain ATCC 25285 / DSM 2151 / CCUG 4856 / JCM 11019 / LMG 10263 / NCTC 9343 / Onslow / VPI 2553 / EN-2).